We begin with the raw amino-acid sequence, 240 residues long: NDR1/HIN1-like protein 2 (240 aa).

A helical membrane pass occupies residues 57 to 77 (NILIAVAVILGVAALILWLIF). Residues Asn109, Asn141, Asn151, and Asn223 are each glycosylated (N-linked (GlcNAc...) asparagine).

Expressed at low levels in roots, rosette leaves, cauline leaves, stems, flowers and siliques.

The protein localises to the cell membrane. In terms of biological role, may play a role in plant immunity. This chain is NDR1/HIN1-like protein 2, found in Arabidopsis thaliana (Mouse-ear cress).